The following is a 440-amino-acid chain: Ribosomal protein uS12 methylthiotransferase RimO (440 aa).

In terms of domain architecture, MTTase N-terminal spans 6-116 (PKVGFVSLGC…VVTAVHEVVP (111 aa)). C15, C51, C80, C149, C153, and C156 together coordinate [4Fe-4S] cluster. The Radical SAM core domain maps to 135 to 373 (LTPRHYAYLK…MAHQQAISAA (239 aa)). The TRAM domain maps to 376–440 (QLKVGKEIEV…DEYDLWAELV (65 aa)).

This sequence belongs to the methylthiotransferase family. RimO subfamily. It depends on [4Fe-4S] cluster as a cofactor.

The protein resides in the cytoplasm. The enzyme catalyses L-aspartate(89)-[ribosomal protein uS12]-hydrogen + (sulfur carrier)-SH + AH2 + 2 S-adenosyl-L-methionine = 3-methylsulfanyl-L-aspartate(89)-[ribosomal protein uS12]-hydrogen + (sulfur carrier)-H + 5'-deoxyadenosine + L-methionine + A + S-adenosyl-L-homocysteine + 2 H(+). Its function is as follows. Catalyzes the methylthiolation of an aspartic acid residue of ribosomal protein uS12. The sequence is that of Ribosomal protein uS12 methylthiotransferase RimO from Pseudomonas aeruginosa (strain ATCC 15692 / DSM 22644 / CIP 104116 / JCM 14847 / LMG 12228 / 1C / PRS 101 / PAO1).